A 306-amino-acid chain; its full sequence is MGGRKMATDEENVYGLEENAQSRQESTRRLILVGRTGAGKSATGNSILGQRRFFSRLGATSVTRACTTGSRRWDKCHVEVVDTPDIFSSQVSKTDPGCEERGHCYLLSAPGPHALLLVTQLGRFTAQDQQAVRQVRDMFGEDVLKWMVIVFTRKEDLAGGSLHDYVSNTENRALRELVAECGGRVCAFDNRATGREQEAQVEQLLGMVEGLVLEHKGAHYSNEVYELAQVLRWAGPEERLRRVAERVAARVQRRPWGAWLSARLWKWLKSPRSWRLGLALLLGGALLFWVLLHRRWSEAVAEVGPD.

Residues 1–21 (MGGRKMATDEENVYGLEENAQ) are disordered. Topologically, residues 1–272 (MGGRKMATDE…RLWKWLKSPR (272 aa)) are cytoplasmic. The AIG1-type G domain occupies 25–229 (ESTRRLILVG…YSNEVYELAQ (205 aa)). The interval 34–41 (GRTGAGKS) is G1. GTP contacts are provided by residues 34-42 (GRTGAGKSA) and serine 55. The G2 stretch occupies residues 61–65 (SVTRA). A G3 region spans residues 82-85 (DTPD). The tract at residues 152 to 155 (TRKE) is G4. GTP contacts are provided by residues 153 to 155 (RKE) and asparagine 190. The interval 189–191 (DNR) is G5. The helical; Anchor for type IV membrane protein transmembrane segment at 273–292 (SWRLGLALLLGGALLFWVLL) threads the bilayer. The Lumenal segment spans residues 293 to 306 (HRRWSEAVAEVGPD).

The protein belongs to the TRAFAC class TrmE-Era-EngA-EngB-Septin-like GTPase superfamily. AIG1/Toc34/Toc159-like paraseptin GTPase family. IAN subfamily. As to expression, predominantly expressed in the spleen and to a lesser extent in the lymph nodes. Detected in T-cells.

It is found in the endoplasmic reticulum membrane. It localises to the golgi apparatus membrane. Its function is as follows. May regulate lymphocyte survival. Required for normal levels of mature T-lymphocytes and mature B-cells. The sequence is that of GTPase IMAP family member 1 (GIMAP1) from Homo sapiens (Human).